The sequence spans 575 residues: Serine/threonine-protein kinase STY46 (575 aa).

The disordered stretch occupies residues 116 to 140; the sequence is ADLDSTSNDAGHSSPTRKSIHPPPA. A compositionally biased stretch (polar residues) spans 118-132; it reads LDSTSNDAGHSSPTR. Residues 178–252 enclose the ACT domain; it reads EITFSTEDKP…AKIELQSQSW (75 aa). The Protein kinase domain occupies 290 to 543; that stretch reads LKFGHKIASG…EIIEQLQEIA (254 aa). ATP contacts are provided by residues 296-304 and K317; that span reads IASGSYGDL. Residue D411 is the Proton acceptor of the active site. Residue T443 is modified to Phosphothreonine.

Belongs to the protein kinase superfamily. Ser/Thr protein kinase family. Post-translationally, autophosphorylated on serine and threonine residues. Autophosphorylated at Thr-443.

Its subcellular location is the cytoplasm. The protein localises to the cytosol. The catalysed reaction is L-seryl-[protein] + ATP = O-phospho-L-seryl-[protein] + ADP + H(+). It catalyses the reaction L-threonyl-[protein] + ATP = O-phospho-L-threonyl-[protein] + ADP + H(+). With respect to regulation, activated by autophosphorylation at Thr-443. Serine/threonine protein kinase that specifically phosphorylates chloroplast precursor proteins in the cytosol within the cleavable presequences (transit peptides). May be part of a cytosolic regulatory network involved in chloroplast protein import. Does not phosphorylate mitochondrion precursor proteins. Specific for ATP and does not utilize other NTPs. Plays a role in chloroplast biogenesis and differentiation in cotyledons, possibly through phosphorylation of chloroplast preproteins. The sequence is that of Serine/threonine-protein kinase STY46 from Arabidopsis thaliana (Mouse-ear cress).